The following is a 168-amino-acid chain: MSRDTSANSSGQQNYTWSERVIQITRVTKVVKGGKKLSFRAIIVIGNNQGSVGVGVGKASDVIGAVKKGVSDCKKQIIEFPLTSSSTISHAVEGRFGAASVILKPSVQGSGVIAGGAMRTVIELSGIKNIVAKQLGTKNHLNNAKATINALSKLNSKSSQLSLMSFSN.

Residues 17–80 form the S5 DRBM domain; the sequence is WSERVIQITR…SDCKKQIIEF (64 aa).

The protein belongs to the universal ribosomal protein uS5 family. Part of the 30S ribosomal subunit. Contacts protein S4.

The protein resides in the plastid. It is found in the chloroplast. Functionally, with S4 and S12 plays an important role in translational accuracy. This chain is Small ribosomal subunit protein uS5c (rps5), found in Cyanidium caldarium (Red alga).